Reading from the N-terminus, the 213-residue chain is Imidazole glycerol phosphate synthase subunit HisH (213 aa).

In terms of domain architecture, Glutamine amidotransferase type-1 spans 6–213 (LVTVIDYGMG…FKNFLNWNGQ (208 aa)). The active-site Nucleophile is Cys-86. Residues His-192 and Glu-194 contribute to the active site.

As to quaternary structure, heterodimer of HisH and HisF.

Its subcellular location is the cytoplasm. The catalysed reaction is 5-[(5-phospho-1-deoxy-D-ribulos-1-ylimino)methylamino]-1-(5-phospho-beta-D-ribosyl)imidazole-4-carboxamide + L-glutamine = D-erythro-1-(imidazol-4-yl)glycerol 3-phosphate + 5-amino-1-(5-phospho-beta-D-ribosyl)imidazole-4-carboxamide + L-glutamate + H(+). It carries out the reaction L-glutamine + H2O = L-glutamate + NH4(+). It participates in amino-acid biosynthesis; L-histidine biosynthesis; L-histidine from 5-phospho-alpha-D-ribose 1-diphosphate: step 5/9. Functionally, IGPS catalyzes the conversion of PRFAR and glutamine to IGP, AICAR and glutamate. The HisH subunit catalyzes the hydrolysis of glutamine to glutamate and ammonia as part of the synthesis of IGP and AICAR. The resulting ammonia molecule is channeled to the active site of HisF. This chain is Imidazole glycerol phosphate synthase subunit HisH, found in Hydrogenovibrio crunogenus (strain DSM 25203 / XCL-2) (Thiomicrospira crunogena).